The following is a 265-amino-acid chain: Apolipoprotein A-I (265 aa).

A signal peptide spans 1-18 (MKAVLLTLAVLFLTGSQA). A run of 2 repeats spans residues 67-88 (LKLL…EQLG) and 89-110 (PVTQ…QEMN). A 10 X approximate tandem repeats region spans residues 67–265 (LKLLDNWDSL…DEASKKLNAQ (199 aa)). A Methionine sulfoxide modification is found at Met109. Residues 111–121 (KDLEEVKQKVQ) form a 3; half-length repeat. A run of 5 repeats spans residues 122–142 (PYLD…RQKV), 144–165 (PLGE…DKLT), 166–187 (PLAE…QQLA), 188–209 (PYSD…AGGG), and 210–230 (SLAE…EKAK). The 9; half-length repeat unit spans residues 231–241 (PALEDLRQGLV). Copy 10 of the repeat occupies 242–265 (PVLESLKVSILAAIDEASKKLNAQ).

This sequence belongs to the apolipoprotein A1/A4/E family. As to quaternary structure, homodimer. Interacts with APOA1BP and CLU. Component of a sperm activating protein complex (SPAP), consisting of APOA1, an immunoglobulin heavy chain, an immunoglobulin light chain and albumin. Interacts with NDRG1. Interacts with SCGB3A2. Interacts with NAXE and YJEFN3. Glycosylated. Post-translationally, palmitoylated. In terms of processing, phosphorylation sites are present in the extracellular medium. Major protein of plasma HDL, also found in chylomicrons.

The protein resides in the secreted. In terms of biological role, participates in the reverse transport of cholesterol from tissues to the liver for excretion by promoting cholesterol efflux from tissues and by acting as a cofactor for the lecithin cholesterol acyltransferase (LCAT). As part of the SPAP complex, activates spermatozoa motility. The chain is Apolipoprotein A-I (APOA1) from Tursiops truncatus (Atlantic bottle-nosed dolphin).